Here is a 531-residue protein sequence, read N- to C-terminus: GTPase Obg (531 aa).

The Obg domain occupies 2-159 (ASFVDRVIVH…QEVELELKSI (158 aa)). The 182-residue stretch at 160-341 (ADIALVGFPS…LSFAMAALVS (182 aa)) folds into the OBG-type G domain. GTP is bound by residues 166–173 (GFPSAGKS), 191–195 (FTTLV), 212–215 (DVPG), 293–296 (NKVD), and 322–324 (STA). The Mg(2+) site is built by Ser-173 and Thr-193. Positions 346 to 365 (QEEQREQQRQTVPVLQPEPV) are disordered. In terms of domain architecture, OCT spans 368 to 453 (RRGRDRREFV…ENGVVFDWEP (86 aa)). Residues 459-531 (AELLGGPRGS…TSETKETNEK (73 aa)) are disordered. Basic and acidic residues-rich tracts occupy residues 468 to 507 (SDLR…ERRA) and 514 to 531 (VDAR…TNEK).

The protein belongs to the TRAFAC class OBG-HflX-like GTPase superfamily. OBG GTPase family. In terms of assembly, monomer. Mg(2+) serves as cofactor.

The protein localises to the cytoplasm. An essential GTPase which binds GTP, GDP and possibly (p)ppGpp with moderate affinity, with high nucleotide exchange rates and a fairly low GTP hydrolysis rate. Plays a role in control of the cell cycle, stress response, ribosome biogenesis and in those bacteria that undergo differentiation, in morphogenesis control. This chain is GTPase Obg, found in Kocuria rhizophila (strain ATCC 9341 / DSM 348 / NBRC 103217 / DC2201).